The following is a 386-amino-acid chain: Formate-dependent phosphoribosylglycinamide formyltransferase (386 aa).

Residues 15–16 (EL) and glutamate 75 each bind N(1)-(5-phospho-beta-D-ribosyl)glycinamide. Residues arginine 107, lysine 148, 153–158 (SSGKGQ), 188–191 (EQFI), and glutamate 196 each bind ATP. Residues 112–301 (ALAAQQLNLQ…EFELHLRAIV (190 aa)) enclose the ATP-grasp domain. The Mg(2+) site is built by glutamate 260 and glutamate 272. N(1)-(5-phospho-beta-D-ribosyl)glycinamide contacts are provided by residues aspartate 279, lysine 349, and 356-357 (RR).

This sequence belongs to the PurK/PurT family. As to quaternary structure, homodimer.

The enzyme catalyses N(1)-(5-phospho-beta-D-ribosyl)glycinamide + formate + ATP = N(2)-formyl-N(1)-(5-phospho-beta-D-ribosyl)glycinamide + ADP + phosphate + H(+). It functions in the pathway purine metabolism; IMP biosynthesis via de novo pathway; N(2)-formyl-N(1)-(5-phospho-D-ribosyl)glycinamide from N(1)-(5-phospho-D-ribosyl)glycinamide (formate route): step 1/1. Its function is as follows. Involved in the de novo purine biosynthesis. Catalyzes the transfer of formate to 5-phospho-ribosyl-glycinamide (GAR), producing 5-phospho-ribosyl-N-formylglycinamide (FGAR). Formate is provided by PurU via hydrolysis of 10-formyl-tetrahydrofolate. This chain is Formate-dependent phosphoribosylglycinamide formyltransferase, found in Francisella tularensis subsp. tularensis (strain WY96-3418).